We begin with the raw amino-acid sequence, 191 residues long: MASTTLSIATTIRSSSYPTLASINHFPSRTTTIEFPSRFGGGSSSTLTHRATHLRPIAAVEAPEKIEKIGSEISSLTLEEARILVDYLQDKFGVSPLSLAPAAAAVAAPADGGAAAVVEEQTEFDVVINEVPSSSRIAVIKAVRALTSLALKEAKELIEGLPKKFKEGITKDEAEEAKKTLEEAGAKVSIA.

Residues 1–58 constitute a chloroplast transit peptide; sequence MASTTLSIATTIRSSSYPTLASINHFPSRTTTIEFPSRFGGGSSSTLTHRATHLRPIA.

Belongs to the bacterial ribosomal protein bL12 family.

Its subcellular location is the plastid. The protein localises to the chloroplast. In Arabidopsis thaliana (Mouse-ear cress), this protein is Large ribosomal subunit protein bL12cz (RPL12A).